The sequence spans 205 residues: Ribosomal RNA small subunit methyltransferase G (205 aa).

S-adenosyl-L-methionine-binding positions include glycine 73, leucine 78, valine 124 to glutamate 125, and arginine 139.

Belongs to the methyltransferase superfamily. RNA methyltransferase RsmG family.

The protein resides in the cytoplasm. It catalyses the reaction guanosine(527) in 16S rRNA + S-adenosyl-L-methionine = N(7)-methylguanosine(527) in 16S rRNA + S-adenosyl-L-homocysteine. Specifically methylates the N7 position of guanine in position 527 of 16S rRNA. The polypeptide is Ribosomal RNA small subunit methyltransferase G (Methylobacillus flagellatus (strain ATCC 51484 / DSM 6875 / VKM B-1610 / KT)).